The following is a 335-amino-acid chain: Protein FATTY ACID EXPORT 3, chloroplastic (335 aa).

A chloroplast-targeting transit peptide spans 1–72 (MMSIPMELMS…PEVLLNRSVV (72 aa)). Residues 82-101 (GESGVEVGKEKSDIDVEDDT) are disordered. A compositionally biased stretch (basic and acidic residues) spans 88–101 (VGKEKSDIDVEDDT). A coiled-coil region spans residues 101–160 (TSKEAWKQTLESFKEQVSKMQSVSSEAYSVNSQKAMTVLKETSEQLRIQAEKAKEELGTK). 3 helical membrane passes run 205–225 (FHVG…NFMV), 228–248 (SIPA…LSLA), and 286–306 (STFL…FYLY). The tract at residues 316 to 335 (PTLEDGGEDESSDGFVRSEG) is disordered.

The protein belongs to the TMEM14 family.

The protein localises to the plastid. Its subcellular location is the chloroplast membrane. In terms of biological role, may be involved in free fatty acids export from the plastids. This Arabidopsis thaliana (Mouse-ear cress) protein is Protein FATTY ACID EXPORT 3, chloroplastic.